A 451-amino-acid polypeptide reads, in one-letter code: Acetylornithine aminotransferase, mitochondrial (451 aa).

Lys-302 carries the N6-(pyridoxal phosphate)lysine modification.

The protein belongs to the class-III pyridoxal-phosphate-dependent aminotransferase family. Pyridoxal 5'-phosphate is required as a cofactor. Found at highest levels in nodules, confined to the infected cells.

Its subcellular location is the mitochondrion. The catalysed reaction is N(2)-acetyl-L-ornithine + 2-oxoglutarate = N-acetyl-L-glutamate 5-semialdehyde + L-glutamate. The protein operates within amino-acid biosynthesis; L-arginine biosynthesis; N(2)-acetyl-L-ornithine from L-glutamate: step 4/4. Involved in the biosynthesis of citrulline. This Alnus glutinosa (European alder) protein is Acetylornithine aminotransferase, mitochondrial (AG118).